Here is a 154-residue protein sequence, read N- to C-terminus: Cysteine-rich DPF motif domain-containing protein 1 (154 aa).

This sequence belongs to the CDPF1 family.

The protein is Cysteine-rich DPF motif domain-containing protein 1 of Drosophila melanogaster (Fruit fly).